A 489-amino-acid chain; its full sequence is 3-octaprenyl-4-hydroxybenzoate carboxy-lyase (489 aa).

Asn172 is a Mn(2+) binding site. Prenylated FMN contacts are provided by residues 175–177 (IYR), 189–191 (RWL), and 194–195 (RG). Glu238 is a binding site for Mn(2+). The Proton donor role is filled by Asp287.

The protein belongs to the UbiD family. As to quaternary structure, homohexamer. Requires prenylated FMN as cofactor. It depends on Mn(2+) as a cofactor.

The protein localises to the cell membrane. The catalysed reaction is a 4-hydroxy-3-(all-trans-polyprenyl)benzoate + H(+) = a 2-(all-trans-polyprenyl)phenol + CO2. Its pathway is cofactor biosynthesis; ubiquinone biosynthesis. Its function is as follows. Catalyzes the decarboxylation of 3-octaprenyl-4-hydroxy benzoate to 2-octaprenylphenol, an intermediate step in ubiquinone biosynthesis. This Aeromonas salmonicida (strain A449) protein is 3-octaprenyl-4-hydroxybenzoate carboxy-lyase.